Consider the following 1040-residue polypeptide: Multidrug resistance protein MdtB (1040 aa).

11 consecutive transmembrane segments (helical) span residues 15–37 (LFILRPVATTLLMAAILLAGIIG), 345–362 (FELMLAIALVVMIIYLFL), 367–389 (ATIIPGVAVPLSLIGTFAVMVFL), 396–418 (LTLMALTIATGFVVDDAIVVIEN), 438–460 (GEIGFTIISLTFSLIAVLIPLLF), 472–494 (FAVTLAVAILISAVVSLTLTPMM), 535–557 (HPWLTLSVAFATLLLSVMLWITI), 867–889 (VWLIVAAVVAMYIVLGVLYESFI), 909–931 (LIIAGSELDIIAIIGIILLIGIV), 968–990 (ILMTTLAALLGALPLMLSTGVGA), and 1000–1022 (MVGGLLVSQVLTLFTTPVIYLLF).

The protein belongs to the resistance-nodulation-cell division (RND) (TC 2.A.6) family. MdtB subfamily. As to quaternary structure, part of a tripartite efflux system composed of MdtA, MdtB and MdtC. MdtB forms a heteromultimer with MdtC.

Its subcellular location is the cell inner membrane. This is Multidrug resistance protein MdtB from Salmonella typhi.